The chain runs to 166 residues: Vasopressin-neurophysin 2-copeptin (166 aa).

An N-terminal signal peptide occupies residues 1-19; sequence MPDATLPACFLGLLALTSA. Cysteines 20 and 25 form a disulfide. Residue G28 is modified to Glycine amide. 7 cysteine pairs are disulfide-bonded: C41/C85, C44/C58, C52/C75, C59/C65, C92/C104, C98/C116, and C105/C110. N133 carries N-linked (GlcNAc...) asparagine glycosylation.

It belongs to the vasopressin/oxytocin family. In terms of assembly, interacts with vasopressin receptors V1bR/AVPR1B (Ki=85 pM), V1aR/AVPR1A (Ki=0.6 nM) and V2R/AVPR2 (Ki=4.9 nM). Interacts with oxytocin receptor (OXTR) (Ki=110 nM). Post-translationally, a shorter neurophysin molecule (32-123) is called neurophysin-I and is derived from the complete protein (called neurophysin III) by proteolytic degradation (in vivo or after extraction).

It localises to the secreted. Its function is as follows. Neurophysin 2 specifically binds vasopressin. Functionally, vasopressin has a direct antidiuretic action on the kidney, it also causes vasoconstriction of the peripheral vessels. Acts by binding to vasopressin receptors (V1bR/AVPR1B, V1aR/AVPR1A, and V2R/AVPR2). In Sus scrofa (Pig), this protein is Vasopressin-neurophysin 2-copeptin (AVP).